The chain runs to 135 residues: Ribosome-binding factor A (135 aa).

The protein belongs to the RbfA family. Monomer. Binds 30S ribosomal subunits, but not 50S ribosomal subunits or 70S ribosomes.

Its subcellular location is the cytoplasm. In terms of biological role, one of several proteins that assist in the late maturation steps of the functional core of the 30S ribosomal subunit. Associates with free 30S ribosomal subunits (but not with 30S subunits that are part of 70S ribosomes or polysomes). Required for efficient processing of 16S rRNA. May interact with the 5'-terminal helix region of 16S rRNA. This is Ribosome-binding factor A from Bartonella tribocorum (strain CIP 105476 / IBS 506).